We begin with the raw amino-acid sequence, 319 residues long: Dehydrogenase/reductase SDR family member 9 (319 aa).

The signal sequence occupies residues 1–17 (MLFWLLVLLILCGFLWN). NAD(+)-binding positions include 34–58 (ITGCDTGFGNLAARTFDKKGFHVIA) and D83. Residue S164 participates in substrate binding. The active-site Proton acceptor is the Y176. K180 is an NAD(+) binding site.

This sequence belongs to the short-chain dehydrogenases/reductases (SDR) family. In terms of assembly, homotetramer.

Its subcellular location is the microsome membrane. The protein localises to the endoplasmic reticulum membrane. The enzyme catalyses 3beta-hydroxy-5alpha-pregnane-20-one + NAD(+) = 5alpha-pregnane-3,20-dione + NADH + H(+). The catalysed reaction is 17beta-hydroxy-5alpha-androstan-3-one + NAD(+) = 5alpha-androstan-3,17-dione + NADH + H(+). It carries out the reaction androsterone + NAD(+) = 5alpha-androstan-3,17-dione + NADH + H(+). It catalyses the reaction 5alpha-androstane-3alpha,17beta-diol + NAD(+) = 17beta-hydroxy-5alpha-androstan-3-one + NADH + H(+). The enzyme catalyses all-trans-retinol + NAD(+) = all-trans-retinal + NADH + H(+). The catalysed reaction is 3alpha-hydroxy-5alpha-pregnan-20-one + NAD(+) = 5alpha-pregnane-3,20-dione + NADH + H(+). 3-alpha-hydroxysteroid dehydrogenase that converts 3-alpha-tetrahydroprogesterone (allopregnanolone) to dihydroxyprogesterone and 3-alpha-androstanediol to dihydroxyprogesterone. Also plays a role in the biosynthesis of retinoic acid from retinaldehyde. Can utilize both NADH and NADPH. This Bos taurus (Bovine) protein is Dehydrogenase/reductase SDR family member 9 (DHRS9).